Here is a 164-residue protein sequence, read N- to C-terminus: Cytochrome c-type biogenesis protein CcmE (164 aa).

Residues 1–8 (MNPRRKSR) are Cytoplasmic-facing. The chain crosses the membrane as a helical; Signal-anchor for type II membrane protein span at residues 9–29 (LYLAIVVLIGVALTATLMLYA). Residues 30–164 (LRSNIDLFYT…ATPQNEGAKS (135 aa)) are Periplasmic-facing. Heme is bound by residues histidine 130 and tyrosine 134. Over residues 131–148 (DEKYTPPEVADAMKENHK) the composition is skewed to basic and acidic residues. The tract at residues 131–164 (DEKYTPPEVADAMKENHKGPASAYATPQNEGAKS) is disordered. Over residues 155 to 164 (ATPQNEGAKS) the composition is skewed to polar residues.

This sequence belongs to the CcmE/CycJ family.

The protein resides in the cell inner membrane. In terms of biological role, heme chaperone required for the biogenesis of c-type cytochromes. Transiently binds heme delivered by CcmC and transfers the heme to apo-cytochromes in a process facilitated by CcmF and CcmH. The chain is Cytochrome c-type biogenesis protein CcmE from Serratia proteamaculans (strain 568).